Consider the following 242-residue polypeptide: Venom nerve growth factor 3 (242 aa).

Residues M1–A18 form the signal peptide. Residues A19–R125 constitute a propeptide that is removed on maturation. A disordered region spans residues H45–P69. Residues E46–D66 are compositionally biased toward basic and acidic residues. 3 disulfides stabilise this stretch: C139–C203, C181–C231, and C191–C233.

This sequence belongs to the NGF-beta family. Homodimer; non-covalently linked. Expressed by the venom gland.

It localises to the secreted. Its function is as follows. Nerve growth factor is important for the development and maintenance of the sympathetic and sensory nervous systems. It stimulates division and differentiation of sympathetic and embryonic sensory neurons as well as basal forebrain cholinergic neurons in the brain. Its relevance in the snake venom is not clear. However, it has been shown to inhibit metalloproteinase-dependent proteolysis of platelet glycoprotein Ib alpha, suggesting a metalloproteinase inhibition to prevent metalloprotease autodigestion and/or protection against prey proteases. Binds a lipid between the two protein chains in the homodimer. The lipid-bound form promotes histamine relase from mouse mast cells, contrary to the lipid-free form. This Pseudechis australis (Mulga snake) protein is Venom nerve growth factor 3.